The chain runs to 456 residues: Anthocyanidin 3-O-glucosyltransferase UFGT (456 aa).

Kaempferol is bound at residue Ser18. Ser18 lines the quercetin pocket. Residue Thr19 participates in UDP binding. UDP-alpha-D-glucose is bound at residue Thr19. Residues His20 and Gln84 each contribute to the kaempferol site. His20 serves as the catalytic Proton acceptor. Position 84 (Gln84) interacts with quercetin. Asp119 functions as the Charge relay in the catalytic mechanism. Thr141 contacts UDP-alpha-D-glucose. Kaempferol contacts are provided by His150 and Gln188. Positions 150 and 188 each coordinate quercetin. Positions 280, 306, 332, 333, and 350 each coordinate UDP. Thr280, Ser306, Trp332, Ala333, His350, Trp353, Asn354, Ser355, and Glu358 together coordinate UDP-alpha-D-glucose. Residues Asn354, Ser355, and Glu358 each contribute to the UDP site. Gly373 contributes to the quercetin binding site. UDP-alpha-D-glucose is bound by residues Asp374 and Gln375.

Belongs to the UDP-glycosyltransferase family. In terms of tissue distribution, detected only in berry skin.

It carries out the reaction an anthocyanidin + UDP-alpha-D-glucose + H(+) = an anthocyanidin 3-O-beta-D-glucoside + UDP. The catalysed reaction is cyanidin + UDP-alpha-D-glucose = cyanidin 3-O-beta-D-glucoside + UDP + H(+). It catalyses the reaction delphinidin + UDP-alpha-D-glucose = delphinidin 3-O-beta-D-glucoside + UDP. The enzyme catalyses peonidin + UDP-alpha-D-glucose = peonidin 3-O-beta-D-glucoside + UDP. It carries out the reaction pelargonidin + UDP-alpha-D-glucose = pelargonidin 3-O-beta-D-glucoside + UDP. The catalysed reaction is malvidin + UDP-alpha-D-glucose = malvidin 3-O-beta-D-glucoside + UDP. It catalyses the reaction a flavonol + UDP-alpha-D-glucose = a flavonol 3-O-beta-D-glucoside + UDP + H(+). It functions in the pathway pigment biosynthesis; anthocyanin biosynthesis. With respect to regulation, inhibited by Mn(2+) and Zn(2+). Its function is as follows. In the presence of other necessary color factors, this glycosylation reaction allows the accumulation of anthocyanin pigments. Involved in the formation of red wine pigments. UDP-glucose (UDP-Glc) is the physiological sugar donor, and cyanidin is the natural acceptor in vivo. Can glucosylate the anthocyanidins delphinidin, peonidin, pelargonidin and malvidin. The flavonols quercitin and kaempferol can also be glucosylated in vitro, but with glucosylation rates 50-100 times lower than cyanidin. In vitro, can use UDP-Glc, UDP-5SGlc, UDP-Xyl, UDP-Man, UDP-Gal, UDP-GlcNAc, GDP-Glc, dTDP-Glc and dTDP-Xyl as sugar donors, but not UDP-6OMeGal, UDP-Ara, UDP-6FGal, UDP-GlcN, UDP-2FGal, UDP-5SAra, GDP-Man, GDP-Fuc, UDP-Fuc or UDP-Rha. In Vitis vinifera (Grape), this protein is Anthocyanidin 3-O-glucosyltransferase UFGT.